A 224-amino-acid polypeptide reads, in one-letter code: uncharacterized protein (224 aa).

Transmembrane regions (helical) follow at residues methionine 25–phenylalanine 45, isoleucine 54–isoleucine 74, isoleucine 91–phenylalanine 111, phenylalanine 119–leucine 139, isoleucine 142–isoleucine 162, and histidine 174–phenylalanine 194.

The protein resides in the cell membrane. This is an uncharacterized protein from Mycoplasma genitalium (strain ATCC 33530 / DSM 19775 / NCTC 10195 / G37) (Mycoplasmoides genitalium).